The sequence spans 178 residues: Alkyl hydroperoxide reductase AhpD (178 aa).

The active-site Proton donor is Cys-131. Cys-131 and Cys-134 are oxidised to a cystine. The Cysteine sulfenic acid (-SOH) intermediate role is filled by Cys-134.

Belongs to the AhpD family. In terms of assembly, homotrimer.

It carries out the reaction N(6)-[(R)-dihydrolipoyl]-L-lysyl-[lipoyl-carrier protein] + a hydroperoxide = N(6)-[(R)-lipoyl]-L-lysyl-[lipoyl-carrier protein] + an alcohol + H2O. Antioxidant protein with alkyl hydroperoxidase activity. Required for the reduction of the AhpC active site cysteine residues and for the regeneration of the AhpC enzyme activity. This Streptomyces coelicolor (strain ATCC BAA-471 / A3(2) / M145) protein is Alkyl hydroperoxide reductase AhpD.